The sequence spans 155 residues: RNA pyrophosphohydrolase (155 aa).

The 143-residue stretch at 6–148 (GYRANVAIVL…KQDVYRRALT (143 aa)) folds into the Nudix hydrolase domain. Positions 38–59 (GGVATGETPLQAMYRELYEEVG) match the Nudix box motif.

This sequence belongs to the Nudix hydrolase family. RppH subfamily. It depends on a divalent metal cation as a cofactor.

In terms of biological role, accelerates the degradation of transcripts by removing pyrophosphate from the 5'-end of triphosphorylated RNA, leading to a more labile monophosphorylated state that can stimulate subsequent ribonuclease cleavage. This Francisella philomiragia subsp. philomiragia (strain ATCC 25017 / CCUG 19701 / FSC 153 / O#319-036) protein is RNA pyrophosphohydrolase.